We begin with the raw amino-acid sequence, 339 residues long: MMPFCHNIINISCVKNNWSNDVRASLYSLMVLIILTTLVGNLIVIVSISHFKQLHTPTNWLIHSMATVDFLLGCLVMPYSMVRSAEHCWYFGEVFCKIHTSTDIMLSSASIFHLSFISIDRYYAVCDPLRYKAKMNILVICVMIFISWSVPAVFAFGMIFLELNFKGAEEIYYKHVHCRGGCSVFFSKISGVLTFMTSFYIPGSIMLCVYYRIYLIAKEQARLISDANQKLQIGLEMKNGISQSKERKAVKTLGIVMGVFLICWCPFFICTVMDPFLHYIIPPTLNDVLIWFGYLNSTFNPMVYAFFYPWFRKALKMMLFGKIFQKDSSRCKLFLELSS.

The Extracellular portion of the chain corresponds to 1–24 (MMPFCHNIINISCVKNNWSNDVRA). 3 cysteine pairs are disulfide-bonded: Cys5-Cys178, Cys13-Cys88, and Cys96-Cys182. Asn10 and Asn17 each carry an N-linked (GlcNAc...) asparagine glycan. The helical transmembrane segment at 25–49 (SLYSLMVLIILTTLVGNLIVIVSIS) threads the bilayer. Over 50-59 (HFKQLHTPTN) the chain is Cytoplasmic. The chain crosses the membrane as a helical span at residues 60 to 81 (WLIHSMATVDFLLGCLVMPYSM). Residues 82–96 (VRSAEHCWYFGEVFC) are Extracellular-facing. The helical transmembrane segment at 97–119 (KIHTSTDIMLSSASIFHLSFISI) threads the bilayer. Asp103 contributes to the 2-phenylethylamine binding site. The Cytoplasmic segment spans residues 120–139 (DRYYAVCDPLRYKAKMNILV). The helical transmembrane segment at 140-161 (ICVMIFISWSVPAVFAFGMIFL) threads the bilayer. Over 162-188 (ELNFKGAEEIYYKHVHCRGGCSVFFSK) the chain is Extracellular. The interval 175–186 (HVHCRGGCSVFF) is extracellular Loop 2 (ECL2). The chain crosses the membrane as a helical span at residues 189–211 (ISGVLTFMTSFYIPGSIMLCVYY). Over 212-249 (RIYLIAKEQARLISDANQKLQIGLEMKNGISQSKERKA) the chain is Cytoplasmic. Residues 250–273 (VKTLGIVMGVFLICWCPFFICTVM) traverse the membrane as a helical segment. Residues 274–286 (DPFLHYIIPPTLN) are Extracellular-facing. A helical membrane pass occupies residues 287 to 307 (DVLIWFGYLNSTFNPMVYAFF). Residues 308 to 339 (YPWFRKALKMMLFGKIFQKDSSRCKLFLELSS) are Cytoplasmic-facing.

It belongs to the G-protein coupled receptor 1 family. As to expression, expressed at low level in both the central and peripheral nervous system. Moderately expressed in stomach. Low levels in amygdala, kidney, and lung, and small intestine. Trace amounts in cerebellum, dorsal root ganglia, hippocampus, hypothalamus, liver, medulla, pancreas, pituitary, pontine reticular formation, prostate, skeletal muscle and spleen.

Its subcellular location is the endomembrane system. The protein localises to the endoplasmic reticulum membrane. It localises to the cell membrane. Activated by SEP-363856 small molecule: IHCH-7179 acts both as an agonist activator for HTR1A and TAAR1. In terms of biological role, intracellular G-protein coupled receptor for trace amines, which recognizes endogenous amine-containing metabolites such as beta-phenylethylamine (beta-PEA), 3-iodothyronamine (T1AM), isoamylamine (IAA), cadaverine (CAD), cyclohexylamine (CHA), p-tyramine (p-TYR), trimethylamine (TMA), octopamine and tryptamine. Also functions as a receptor for various drugs and psychoactive substances, such as amphetamine and methamphetamine. Unresponsive to classical biogenic amines, such as epinephrine and histamine and only partially activated by dopamine and serotonin. Expressed in both the central and peripheral nervous system: TAAR1 activation regulates the activity of several neurotransmitter signaling pathways by (1) decreasing the basal firing rates of the neurons involved and by (2) lowering the sensitivity of receptors to neurotransmitters. Ligand binding causes a conformation change that triggers signaling via guanine nucleotide-binding proteins (G proteins) and modulates the activity of downstream effectors. TAAR1 is coupled with different G(i)/G(o)-, G(s)- or G(q)/G(11) classes of G alpha proteins depending on the ligand. CAD-binding is coupled to G(i)/G(o) G alpha proteins and mediates inhibition of adenylate cyclase activity. T1AM- or beta-PEA-binding is coupled to G(s) G alpha proteins and mediates activation of adenylate cyclase activity. CHA- or IAA-binding is coupled to G(q)/G(11) G alpha proteins and activates phospholipase C-beta, releasing diacylglycerol (DAG) and inositol 1,4,5-trisphosphate (IP3) second messengers. TMA-binding is coupled with all three G(i)/G(o)-, G(s)- or G(q)/G(11) G alpha protein subtypes. Amphetamine-binding is coupled with G(s)- or G(12)/G(13) G alpha protein subtypes. The protein is Trace amine-associated receptor 1 of Homo sapiens (Human).